The chain runs to 237 residues: Probable GTP-binding protein EngB (237 aa).

An EngB-type G domain is found at 13–188 (TGYEIAFAGR…ASVMAGRLNY (176 aa)). GTP contacts are provided by residues 21 to 28 (GRSNAGKS), 48 to 52 (GRTQM), 67 to 70 (DLPG), 134 to 137 (TKAD), and 167 to 169 (FSS). Mg(2+)-binding residues include S28 and T50. Positions 207–220 (DDLNDELMDQDETS) are enriched in acidic residues. The tract at residues 207–237 (DDLNDELMDQDETSEFNTENIDDHLDQEPKI) is disordered. The span at 227–237 (IDDHLDQEPKI) shows a compositional bias: basic and acidic residues.

Belongs to the TRAFAC class TrmE-Era-EngA-EngB-Septin-like GTPase superfamily. EngB GTPase family. The cofactor is Mg(2+).

Necessary for normal cell division and for the maintenance of normal septation. The sequence is that of Probable GTP-binding protein EngB from Acinetobacter baylyi (strain ATCC 33305 / BD413 / ADP1).